We begin with the raw amino-acid sequence, 450 residues long: uncharacterized protein (450 aa).

One can recognise a TRAM domain in the interval 1 to 58; the sequence is MQKNQIVDLEITDLSYEAMGVAHLDGMTVFVNNALPGEIVSAKLLKVKKNFAFAKIEK. Positions 280, 309, 330, and 378 each coordinate S-adenosyl-L-methionine. C405 acts as the Nucleophile in catalysis.

This sequence belongs to the class I-like SAM-binding methyltransferase superfamily. RNA M5U methyltransferase family.

This is an uncharacterized protein from Lactobacillus johnsonii (strain CNCM I-12250 / La1 / NCC 533).